Reading from the N-terminus, the 547-residue chain is Probable terpene synthase 3 (547 aa).

Positions 298, 302, and 451 each coordinate Mg(2+). Positions 298-302 (DDIYD) match the DDXXD motif motif.

Belongs to the terpene synthase family. Requires Mg(2+) as cofactor.

In terms of biological role, probable sesquiterpene synthase. The protein is Probable terpene synthase 3 (TPS3) of Ricinus communis (Castor bean).